The chain runs to 115 residues: uncharacterized protein (115 aa).

2 helical membrane-spanning segments follow: residues 11 to 31 (FLYL…LVWN) and 85 to 105 (GYII…YALI).

To M.thermoautotrophicum MTH1706.

Its subcellular location is the cell membrane. This is an uncharacterized protein from Methanocaldococcus jannaschii (strain ATCC 43067 / DSM 2661 / JAL-1 / JCM 10045 / NBRC 100440) (Methanococcus jannaschii).